The following is a 57-amino-acid chain: UPF0391 membrane protein Nham_2738 (57 aa).

The next 2 membrane-spanning stretches (helical) occupy residues 4–24 and 30–50; these read WVVT…GGLA and IAKI…VVGL.

The protein belongs to the UPF0391 family.

The protein localises to the cell membrane. In Nitrobacter hamburgensis (strain DSM 10229 / NCIMB 13809 / X14), this protein is UPF0391 membrane protein Nham_2738.